The primary structure comprises 44 residues: MSYKCSRCKRDVELDEYGGVRCPYCGHRVLLKERSRDIKEVEVE.

Positions 8, 22, and 25 each coordinate Zn(2+).

The protein belongs to the archaeal Rpo12/eukaryotic RPC10 RNA polymerase subunit family. As to quaternary structure, part of the RNA polymerase complex. It depends on Zn(2+) as a cofactor.

Its subcellular location is the cytoplasm. It catalyses the reaction RNA(n) + a ribonucleoside 5'-triphosphate = RNA(n+1) + diphosphate. In terms of biological role, DNA-dependent RNA polymerase (RNAP) catalyzes the transcription of DNA into RNA using the four ribonucleoside triphosphates as substrates. The chain is DNA-directed RNA polymerase subunit Rpo12 from Natronomonas pharaonis (strain ATCC 35678 / DSM 2160 / CIP 103997 / JCM 8858 / NBRC 14720 / NCIMB 2260 / Gabara) (Halobacterium pharaonis).